The primary structure comprises 140 residues: UPF0251 protein Athe_2281 (140 aa).

The protein belongs to the UPF0251 family.

This Caldicellulosiruptor bescii (strain ATCC BAA-1888 / DSM 6725 / KCTC 15123 / Z-1320) (Anaerocellum thermophilum) protein is UPF0251 protein Athe_2281.